The sequence spans 298 residues: Ribosomal protein L11 methyltransferase (298 aa).

The S-adenosyl-L-methionine site is built by Thr139, Gly163, Asp185, and Asn232.

It belongs to the methyltransferase superfamily. PrmA family.

The protein resides in the cytoplasm. The catalysed reaction is L-lysyl-[protein] + 3 S-adenosyl-L-methionine = N(6),N(6),N(6)-trimethyl-L-lysyl-[protein] + 3 S-adenosyl-L-homocysteine + 3 H(+). In terms of biological role, methylates ribosomal protein L11. This is Ribosomal protein L11 methyltransferase from Gloeothece citriformis (strain PCC 7424) (Cyanothece sp. (strain PCC 7424)).